The sequence spans 259 residues: Ribonuclease T2-B (259 aa).

A signal peptide spans Met1–Ala29. Cys53 and Cys59 form a disulfide bridge. The active site involves His69. 3 disulfides stabilise this stretch: Cys79–Cys125, Cys188–Cys244, and Cys206–Cys217. N-linked (GlcNAc...) asparagine glycans are attached at residues Asn80 and Asn110. Residues Glu118 and His122 contribute to the active site. The N-linked (GlcNAc...) asparagine glycan is linked to Asn216.

It belongs to the RNase T2 family.

Its subcellular location is the secreted. It localises to the lysosome lumen. The protein resides in the endoplasmic reticulum lumen. It is found in the mitochondrion intermembrane space. It catalyses the reaction a ribonucleotidyl-ribonucleotide-RNA + H2O = a 3'-end 3'-phospho-ribonucleotide-RNA + a 5'-end dephospho-ribonucleoside-RNA + H(+). The enzyme catalyses an adenylyl-uridine-RNA = a 3'-end 2',3'-cyclophospho-AMP-RNA + a 5'-end dephospho-uridine-RNA. It carries out the reaction a guanylyl-uridine-RNA = a 3'-end 2',3'-cyclophospho-GMP-RNA + a 5'-end dephospho-uridine-RNA. Its activity is regulated as follows. Inhibited by Zn(2+) and Cu(2+). Its function is as follows. Ribonuclease that plays an essential role in innate immune response by recognizing and degrading RNAs from microbial pathogens that are subsequently sensed by TLR8. Cleaves preferentially single-stranded RNA molecules between purine and uridine residues, which critically contributes to the supply of catabolic uridine and the generation of purine-2',3'-cyclophosphate-terminated oligoribonucleotides. In turn, RNase T2 degradation products promote the RNA-dependent activation of TLR8. In plasmacytoid dendritic cells, it cooperates with PLD3 or PLD4 5'-&gt;3' exonucleases to process RNA fragments and release 2',3'-cyclic guanosine monophosphate (2',3'-cGMP), a potent stimulatory ligand for TLR7. Also plays a key role in degradation of mitochondrial RNA and processing of non-coding RNA imported from the cytosol into mitochondria. Participates as well in degradation of mitochondrion-associated cytosolic rRNAs. The protein is Ribonuclease T2-B of Mus musculus (Mouse).